The sequence spans 1188 residues: Integrin alpha-11 (1188 aa).

An N-terminal signal peptide occupies residues 1–22; that stretch reads MDFPRGLLVAWTLSLWPGFTDT. Residues 23–1141 are Extracellular-facing; sequence FNMDTRNPRV…ISKQEDWQVP (1119 aa). FG-GAP repeat units follow at residues 24–85 and 91–151; these read NMDT…NCTK and VTLS…FSKT. Cysteines 76 and 83 form a disulfide. N-linked (GlcNAc...) asparagine glycans are attached at residues N82 and N95. 2 cysteine pairs are disulfide-bonded: C121–C139 and C129–C159. The 182-residue stretch at 164–345 folds into the VWFA domain; that stretch reads DIVIVLDGSN…AALKDIVDAL (182 aa). N291, N331, N358, N449, and N462 each carry an N-linked (GlcNAc...) asparagine glycan. FG-GAP repeat units follow at residues 355–406, 411–461, 462–527, 528–586, and 590–650; these read TNKN…VIPH, LKEF…SMHN, NRSL…RFVY, NGTL…NILK, and QRIT…FEPS. Ca(2+)-binding residues include D488, N490, D492, and D496. N528 is a glycosylation site (N-linked (GlcNAc...) asparagine). Ca(2+)-binding residues include D551, N553, D555, D559, D613, N615, D617, and D621. An N-linked (GlcNAc...) asparagine glycan is attached at N642. 3 disulfide bridges follow: C659-C668, C674-C729, and C781-C787. An N-linked (GlcNAc...) asparagine glycan is attached at N694. N-linked (GlcNAc...) asparagine glycosylation is present at N857. A disulfide bond links C881 and C893. N-linked (GlcNAc...) asparagine glycans are attached at residues N894, N973, N1031, N1039, and N1059. The helical transmembrane segment at 1142–1164 threads the bilayer; that stretch reads IWIIVGSTLGGLLLLALLVLALW. Residues 1165–1188 lie on the Cytoplasmic side of the membrane; sequence KLGFFKSAKRKREPGLGPIPKELK.

It belongs to the integrin alpha chain family. In terms of assembly, heterodimer of an alpha and a beta subunit. Alpha-11 associates with beta-1. Interacts with RAB21.

It localises to the membrane. Its function is as follows. Integrin alpha-11/beta-1 is a receptor for collagen. The polypeptide is Integrin alpha-11 (Itga11) (Mus musculus (Mouse)).